A 185-amino-acid polypeptide reads, in one-letter code: Potassium-transporting ATPase KdpC subunit 2 (185 aa).

A helical transmembrane segment spans residues 8-28 (LGLVLIMFVLCGFIFPLTVTA).

The protein belongs to the KdpC family. As to quaternary structure, the system is composed of three essential subunits: KdpA, KdpB and KdpC.

It localises to the cell membrane. It is found in the membrane raft. In terms of biological role, part of the high-affinity ATP-driven potassium transport (or Kdp) system, which catalyzes the hydrolysis of ATP coupled with the electrogenic transport of potassium into the cytoplasm. This subunit acts as a catalytic chaperone that increases the ATP-binding affinity of the ATP-hydrolyzing subunit KdpB by the formation of a transient KdpB/KdpC/ATP ternary complex. In Staphylococcus aureus (strain Mu50 / ATCC 700699), this protein is Potassium-transporting ATPase KdpC subunit 2.